A 158-amino-acid chain; its full sequence is NAD(P)H-quinone oxidoreductase subunit J, chloroplastic (158 aa).

Belongs to the complex I 30 kDa subunit family. In terms of assembly, NDH is composed of at least 16 different subunits, 5 of which are encoded in the nucleus.

It is found in the plastid. It localises to the chloroplast thylakoid membrane. It carries out the reaction a plastoquinone + NADH + (n+1) H(+)(in) = a plastoquinol + NAD(+) + n H(+)(out). The enzyme catalyses a plastoquinone + NADPH + (n+1) H(+)(in) = a plastoquinol + NADP(+) + n H(+)(out). Functionally, NDH shuttles electrons from NAD(P)H:plastoquinone, via FMN and iron-sulfur (Fe-S) centers, to quinones in the photosynthetic chain and possibly in a chloroplast respiratory chain. The immediate electron acceptor for the enzyme in this species is believed to be plastoquinone. Couples the redox reaction to proton translocation, and thus conserves the redox energy in a proton gradient. The polypeptide is NAD(P)H-quinone oxidoreductase subunit J, chloroplastic (Piper cenocladum (Ant piper)).